A 251-amino-acid chain; its full sequence is Pyruvate formate-lyase-activating enzyme (251 aa).

The Radical SAM core domain maps to 15 to 244; sequence VDGPGLRYIL…KAAYRYVNFK (230 aa). The [4Fe-4S] cluster site is built by C29, C33, and C36. S-adenosyl-L-methionine contacts are provided by residues 35–37, G79, 134–136, and H207; these read YCH and DIK.

It belongs to the organic radical-activating enzymes family. [4Fe-4S] cluster serves as cofactor.

The protein resides in the cytoplasm. The catalysed reaction is glycyl-[formate C-acetyltransferase] + reduced [flavodoxin] + S-adenosyl-L-methionine = glycin-2-yl radical-[formate C-acetyltransferase] + semiquinone [flavodoxin] + 5'-deoxyadenosine + L-methionine + H(+). Its function is as follows. Activation of pyruvate formate-lyase under anaerobic conditions by generation of an organic free radical, using S-adenosylmethionine and reduced flavodoxin as cosubstrates to produce 5'-deoxy-adenosine. The polypeptide is Pyruvate formate-lyase-activating enzyme (pflA) (Staphylococcus aureus (strain N315)).